The sequence spans 381 residues: Phenylalanine dehydrogenase (381 aa).

R55 lines the NAD(+) pocket. Residue K79 coordinates L-phenylalanine. The active site involves K91. NAD(+)-binding positions include D126, S157, T161, 191 to 197, 214 to 215, 254 to 255, and 275 to 277; these read GLGKVGY, DI, AM, and SAN. N277 provides a ligand contact to L-phenylalanine.

The protein belongs to the Glu/Leu/Phe/Val dehydrogenases family.

It catalyses the reaction L-phenylalanine + NAD(+) + H2O = 3-phenylpyruvate + NH4(+) + NADH + H(+). It functions in the pathway amino-acid biosynthesis; L-phenylalanine biosynthesis; L-phenylalanine from phenylpyruvate (PDH route): step 1/1. Functionally, catalyzes the reversible NAD(+)-dependent oxidative deamination of L-phenylalanine to phenylpyruvate. This Lysinibacillus sphaericus (Bacillus sphaericus) protein is Phenylalanine dehydrogenase.